A 480-amino-acid chain; its full sequence is Gamma-aminobutyric acid receptor subunit rho-1 (480 aa).

Residues 1 to 21 (MLAVQNMKFGIFLLWWGWVLA) form the signal peptide. The Extracellular portion of the chain corresponds to 22 to 281 (AESTAHWPGR…LYINFTLRRH (260 aa)). The span at 29 to 38 (PGREVHEPSR) shows a compositional bias: basic and acidic residues. The interval 29 to 67 (PGREVHEPSRKGSRPQRQRRGAHDDAHKQGSPILRRSSD) is disordered. The span at 39-48 (KGSRPQRQRR) shows a compositional bias: basic residues. Arg-126 is a binding site for 4-aminobutanoate. A glycan (N-linked (GlcNAc...) asparagine) is linked at Asn-141. Ser-190 serves as a coordination point for 4-aminobutanoate. The cysteines at positions 199 and 213 are disulfide-linked. Glu-218 is a 4-aminobutanoate binding site. 2 N-linked (GlcNAc...) asparagine glycosylation sites follow: Asn-235 and Asn-275. A helical membrane pass occupies residues 282-302 (IFFFLLQTYFPATLMVMLSWV). At 303 to 314 (SFWIDRRAVPAR) the chain is on the cytoplasmic side. Residues 315–335 (VPLGITTVLTMSTIITGVNAS) form a helical membrane-spanning segment. At 336–346 (MPRVSYIKAVD) the chain is on the extracellular side. A helical membrane pass occupies residues 347 to 367 (IYLWVSFVFVFLSVLEYAAVN). Over 368 to 458 (YLTTVQERKE…MRINTHAIDK (91 aa)) the chain is Cytoplasmic. A helical transmembrane segment spans residues 459–479 (YSRIIFPAAYILFNLIYWSIF). Position 480 (Ser-480) is a topological domain, extracellular.

This sequence belongs to the ligand-gated ion channel (TC 1.A.9) family. Gamma-aminobutyric acid receptor (TC 1.A.9.5) subfamily. GABRR1 sub-subfamily. In terms of assembly, three rho subunits (rho-1/GBRR1, rho-2/GBRR2 and rho-3/GBRR3) coassemble either to form functional homopentamers or heteropentamers. Rho-1/GBRR1 subunits can also associate with alpha-1/GBRA1 subunits to form a functional GABAAR. Interacts with SQSTM1. Expressed in the cerebellum.

It localises to the postsynaptic cell membrane. Its subcellular location is the cell membrane. The catalysed reaction is chloride(in) = chloride(out). Its activity is regulated as follows. Inhibited by TPMPA, a rho-specific antagonist, when forming a homopentamer. In contrast with other GABAARs, rho-1 GABAAR is not inhibited by bicuculline when forming a homopentamer. Its function is as follows. Rho subunit of the pentameric ligand-gated chloride channels responsible for mediating the effects of gamma-aminobutyric acid (GABA), the major inhibitory neurotransmitter in the brain. Rho-containing GABA-gated chloride channels are a subclass of GABA(A) receptors (GABAARs) entirely composed of rho subunits, where GABA molecules bind at the rho intersubunit interfaces. When activated by GABA, rho-GABAARs selectively allow the flow of chloride anions across the cell membrane down their electrochemical gradient. Rho-1 subunits are primarily expressed in retina where rho-1-containing GABAARs play a role in retinal neurotransmission. Rho-1 GABAARs are also involved in neuronal tonic (extrasynaptic) and phasic (synaptic) transmission in the Purkinje neurons of the cerebellum. Rho-1 GABAARs may also contribute to the regulation of glial development in the cerebellum by controlling extrasynaptic transmission. The protein is Gamma-aminobutyric acid receptor subunit rho-1 of Mus musculus (Mouse).